Here is a 79-residue protein sequence, read N- to C-terminus: ATP synthase subunit 9, mitochondrial (79 aa).

The next 2 helical transmembrane spans lie at 21 to 41 (SGLI…ILAF) and 59 to 79 (FALT…ILFI).

The protein belongs to the ATPase C chain family. F-type ATPases have 2 components, CF(1) - the catalytic core - and CF(0) - the membrane proton channel. CF(1) has five subunits: alpha(3), beta(3), gamma(1), delta(1), epsilon(1). CF(0) has three main subunits: a, b and c.

Its subcellular location is the mitochondrion membrane. Its function is as follows. Mitochondrial membrane ATP synthase (F(1)F(0) ATP synthase or Complex V) produces ATP from ADP in the presence of a proton gradient across the membrane which is generated by electron transport complexes of the respiratory chain. F-type ATPases consist of two structural domains, F(1) - containing the extramembraneous catalytic core and F(0) - containing the membrane proton channel, linked together by a central stalk and a peripheral stalk. During catalysis, ATP synthesis in the catalytic domain of F(1) is coupled via a rotary mechanism of the central stalk subunits to proton translocation. Part of the complex F(0) domain. A homomeric c-ring of probably 10 subunits is part of the complex rotary element. The polypeptide is ATP synthase subunit 9, mitochondrial (ATP9) (Acanthamoeba castellanii (Amoeba)).